We begin with the raw amino-acid sequence, 509 residues long: Subtelomeric hrmA-associated cluster protein AFUB_078990 (509 aa).

Part of the subtelomeric hrmA-associated cluster (HAC) containing genes that alter the hyphal surface (such as reduced total chitin or increased beta-glucan exposure) and perturb inter-hyphal interactions within the developing biofilms, resulting in a loss of vertically aligned polarized growing filaments. Consequently, this hypoxia-typic morphotype (called H-MORPH) with altered biofilm architecture leads to increased hypoxia fitness, increased host inflammation, rapid disease progression, and mortality in a murine model of invasive aspergillosis. The sequence is that of Subtelomeric hrmA-associated cluster protein AFUB_078990 from Aspergillus fumigatus (strain CBS 144.89 / FGSC A1163 / CEA10) (Neosartorya fumigata).